A 972-amino-acid chain; its full sequence is 116 kDa U5 small nuclear ribonucleoprotein component (972 aa).

The tract at residues 1-53 is disordered; the sequence is MDTDLYDEFGNYIGPELDSDDEDDELGRESKELDELEDDDDDDDMGDHDEDHP. Acidic residues-rich tracts occupy residues 17 to 26 and 34 to 48; these read LDSDDEDDEL and DELE…MGDH. One can recognise a tr-type G domain in the interval 127–409; the sequence is ELIRNVTLCG…GIHLTKEELK (283 aa). GTP contacts are provided by residues 136 to 143, 204 to 208, and 258 to 261; these read GHLHHGKT, DTPGH, and NKID.

It belongs to the TRAFAC class translation factor GTPase superfamily. Classic translation factor GTPase family. EF-G/EF-2 subfamily. As to quaternary structure, component of the U5 snRNP and the U4/U6-U5 tri-snRNP complex, a building block of the spliceosome. Component of the pre-catalytic, catalytic and post-catalytic spliceosome complexes. Component of the minor spliceosome, which splices U12-type introns.

Its subcellular location is the nucleus. Required for pre-mRNA splicing as component of the spliceosome, including pre-catalytic, catalytic and post-catalytic spliceosomal complexes. Component of the U5 snRNP and the U4/U6-U5 tri-snRNP complex, a building block of the spliceosome. As a component of the minor spliceosome, involved in the splicing of U12-type introns in pre-mRNAs. This chain is 116 kDa U5 small nuclear ribonucleoprotein component (EFTUD2), found in Gallus gallus (Chicken).